The primary structure comprises 521 residues: Medium/long-chain-fatty-acid--[acyl-carrier-protein] ligase MbtM (521 aa).

This sequence belongs to the ATP-dependent AMP-binding enzyme family.

The catalysed reaction is a long-chain fatty acid + holo-[ACP] + ATP = a long-chain fatty acyl-[ACP] + AMP + diphosphate. It carries out the reaction a medium-chain fatty acid + holo-[ACP] + ATP = a medium-chain fatty acyl-[ACP] + AMP + diphosphate. It functions in the pathway siderophore biosynthesis; mycobactin biosynthesis. In terms of biological role, activates lipidic moieties required for mycobactin biosynthesis. Converts medium- to long-chain aliphatic fatty acids into acyl adenylate, which is further transferred on to the phosphopantetheine arm of the carrier protein MbtL. The protein is Medium/long-chain-fatty-acid--[acyl-carrier-protein] ligase MbtM (mbtM) of Mycobacterium sp. (strain MCS).